We begin with the raw amino-acid sequence, 329 residues long: Acetyl-coenzyme A carboxylase carboxyl transferase subunit alpha (329 aa).

A CoA carboxyltransferase C-terminal domain is found at 40–294 (QLETLAARRR…KNALEKHLSE (255 aa)).

The protein belongs to the AccA family. Acetyl-CoA carboxylase is a heterohexamer composed of biotin carboxyl carrier protein (AccB), biotin carboxylase (AccC) and two subunits each of ACCase subunit alpha (AccA) and ACCase subunit beta (AccD).

The protein localises to the cytoplasm. It carries out the reaction N(6)-carboxybiotinyl-L-lysyl-[protein] + acetyl-CoA = N(6)-biotinyl-L-lysyl-[protein] + malonyl-CoA. It functions in the pathway lipid metabolism; malonyl-CoA biosynthesis; malonyl-CoA from acetyl-CoA: step 1/1. In terms of biological role, component of the acetyl coenzyme A carboxylase (ACC) complex. First, biotin carboxylase catalyzes the carboxylation of biotin on its carrier protein (BCCP) and then the CO(2) group is transferred by the carboxyltransferase to acetyl-CoA to form malonyl-CoA. This Prochlorococcus marinus (strain NATL1A) protein is Acetyl-coenzyme A carboxylase carboxyl transferase subunit alpha.